Consider the following 339-residue polypeptide: UDP-galactose transporter homolog 1 (339 aa).

Residues 1–4 (MAGS) are Lumenal-facing. Residues 5–25 (TSSLVICAIGIYATFLTWALV) traverse the membrane as a helical segment. Topologically, residues 26 to 42 (QEPLATRTWPNSMGKFQ) are cytoplasmic. The helical transmembrane segment at 43 to 63 (FPNVISLIQASVAMMMGYLYL) threads the bilayer. The Lumenal segment spans residues 64-106 (NWKKVEYPPRKMIKDHWKQLMLISFTQSSSGPLATTSLKHVDY). A helical transmembrane segment spans residues 107–127 (LTYMLAKSCKMIPVLLVHLLL). Residues 128-136 (YRTPIASQK) lie on the Cytoplasmic side of the membrane. The helical transmembrane segment at 137–157 (KVVALLVSLGVTIFTIGGNDG) threads the bilayer. Residues 158 to 174 (KKLKRSFNESGNDNKLQ) are Lumenal-facing. N-linked (GlcNAc...) asparagine glycosylation is present at N165. The helical transmembrane segment at 175-192 (GFGLLFSSLFLDGLTNAT) threads the bilayer. Over 193–214 (QDKLLKANKAKEKGKQTLITGA) the chain is Cytoplasmic. Residues 215–235 (HLMFTLNLFVILWNILYFIVI) form a helical membrane-spanning segment. At 236–245 (DCKQWDNAVS) the chain is on the lumenal side. A helical membrane pass occupies residues 246 to 266 (VLTMDPQVWGYLMLYSFCGAM). Topologically, residues 267–280 (GQCFIFYTLEQFGS) are cytoplasmic. Residues 281–303 (LVLIMITVTRKMVSMILSIIVFG) traverse the membrane as a helical segment. Topologically, residues 304 to 307 (KSVR) are lumenal. The helical transmembrane segment at 308–327 (FQQWVGMFIVFGGITWEALN) threads the bilayer. Topologically, residues 328 to 339 (KKKANIPKAKSA) are cytoplasmic.

It belongs to the nucleotide-sugar transporter family. SLC35B subfamily.

Its subcellular location is the endoplasmic reticulum membrane. Its function is as follows. May be involved in specific transport of UDP-Gal from the cytosol to the Golgi lumen. Involved in the maintenance of optimal conditions for the folding of secretory pathway proteins in the endoplasmic reticulum. Overexpression confers resistance to the immunosuppressive drug, leflunomide. This is UDP-galactose transporter homolog 1 (HUT1) from Saccharomyces cerevisiae (strain ATCC 204508 / S288c) (Baker's yeast).